A 392-amino-acid chain; its full sequence is Autophagy-related protein 21 (392 aa).

WD repeat units lie at residues 200–240 and 250–289; these read VHQS…NDEP and SRPS…TEAD. The L/FRRG motif motif lies at 246–250; that stretch reads FRRGS.

Belongs to the WD repeat PROPPIN family.

The protein resides in the cytoplasm. The protein localises to the membrane. Its subcellular location is the vacuole membrane. Its function is as follows. Required for cytoplasm to vacuole transport (Cvt) vesicles formation and mitophagy. Involved in binding of phosphatidylethanolamine to ATG8 and in recruitment of ATG8 and ATG5 to the pre-autophagosomal structure. Protects ATG8 from ARG4-mediated cleavage. This is Autophagy-related protein 21 (ATG21) from Kluyveromyces lactis (strain ATCC 8585 / CBS 2359 / DSM 70799 / NBRC 1267 / NRRL Y-1140 / WM37) (Yeast).